A 186-amino-acid polypeptide reads, in one-letter code: uncharacterized protein (186 aa).

The region spanning 1–181 (MVSFSYKGNL…TFVSLASDFL (181 aa)) is the Macro domain.

The protein belongs to the MacroD-type family.

This is an uncharacterized protein from Thermoplasma volcanium (strain ATCC 51530 / DSM 4299 / JCM 9571 / NBRC 15438 / GSS1).